The sequence spans 272 residues: Dermonecrotic toxin StSicTox-betaIF1 (272 aa).

His5 is an active-site residue. Residues Glu25 and Asp27 each coordinate Mg(2+). The Nucleophile role is filled by His41. Intrachain disulfides connect Cys45–Cys51 and Cys47–Cys189. Position 85 (Asp85) interacts with Mg(2+).

Belongs to the arthropod phospholipase D family. Class II subfamily. The cofactor is Mg(2+). In terms of tissue distribution, expressed by the venom gland.

It localises to the secreted. The catalysed reaction is an N-(acyl)-sphingosylphosphocholine = an N-(acyl)-sphingosyl-1,3-cyclic phosphate + choline. It carries out the reaction an N-(acyl)-sphingosylphosphoethanolamine = an N-(acyl)-sphingosyl-1,3-cyclic phosphate + ethanolamine. The enzyme catalyses a 1-acyl-sn-glycero-3-phosphocholine = a 1-acyl-sn-glycero-2,3-cyclic phosphate + choline. It catalyses the reaction a 1-acyl-sn-glycero-3-phosphoethanolamine = a 1-acyl-sn-glycero-2,3-cyclic phosphate + ethanolamine. Functionally, dermonecrotic toxins cleave the phosphodiester linkage between the phosphate and headgroup of certain phospholipids (sphingolipid and lysolipid substrates), forming an alcohol (often choline) and a cyclic phosphate. This toxin acts on sphingomyelin (SM). It may also act on ceramide phosphoethanolamine (CPE), lysophosphatidylcholine (LPC) and lysophosphatidylethanolamine (LPE), but not on lysophosphatidylserine (LPS), and lysophosphatidylglycerol (LPG). It acts by transphosphatidylation, releasing exclusively cyclic phosphate products as second products. Induces dermonecrosis, hemolysis, increased vascular permeability, edema, inflammatory response, and platelet aggregation. This Sicarius terrosus (Cave spider) protein is Dermonecrotic toxin StSicTox-betaIF1.